We begin with the raw amino-acid sequence, 607 residues long: MEEVTRSVLAEEILKRLDLENLCSVACVSTTLRSAVVSGVLPSLTSLDLSVFSPDDETLNHVLRGCIGLSSLTLNCLRLNAASVRGVLGPHLRELHLLRCSLLSSTVLTYIGTLCPNLRVLTLEMADLDSPDVFQSNLTQMLNGCPYLESLQLNIRGILVDATAFQSVRFSLPETLKALRLQPLLESEAILLMNRFKVTGTYLSQPDYNSALLSPSPSFTLQSLSLVLDLISDRLIIAITGSLPQLVKLDLEDRPEKEPFPDNDLTYTGLQALGFCQQLTSLSLVRTCYNRKISFKRINDMGIFLLSEACKGLESVRLGGFPKVSDAGFASLLHSCRNLKKFEVRGAFLLSDLAFHDVTGSSCSLQEVRLSTCPLITSEAVKKLGLCGNLEVLDLGSCKSISDSCLNSVSALRKLTSLNLAGADVTDSGMLALGKSDVPITQLSLRGCRRVSDRGISYLLNNEGTISKTLSTLDLGHMPGISDRAIHTITHCCKALTELSIRSCFHVTDSSIESLATWERQAEGGSKQLRKLNVHNCVSLTTGALRWLSKPSFAGLHWLGMGQTRFAGRKETVTAMICGQRPWLTLCFDGCELGCSDGWEFHTPQRH.

An F-box domain is found at 9 to 47 (LAEEILKRLDLENLCSVACVSTTLRSAVVSGVLPSLTSL). LRR repeat units lie at residues 51-76 (VFSP…TLNC), 77-99 (LRLN…HLLR), 100-125 (CSLL…TLEM), 130-155 (SPDV…QLNI), 228-253 (LDLI…DLED), 262-286 (DNDL…SLVR), 295-320 (FKRI…RLGG), 321-346 (FPKV…EVRG), 347-372 (AFLL…RLST), 373-397 (CPLI…DLGS), 398-422 (CKSI…NLAG), 424-447 (DVTD…SLRG), 448-477 (CRRV…DLGH), 478-503 (MPGI…SIRS), 504-536 (CFHV…NVHN), and 537-563 (CVSL…GMGQ).

The sequence is that of F-box protein At-B (ATB) from Arabidopsis thaliana (Mouse-ear cress).